Consider the following 303-residue polypeptide: Catechol 1,2-dioxygenase (303 aa).

Residues tyrosine 156, tyrosine 191, histidine 215, and histidine 217 each coordinate Fe cation.

In terms of assembly, homodimer. The cofactor is Fe(3+).

It carries out the reaction catechol + O2 = cis,cis-muconate + 2 H(+). The protein operates within aromatic compound metabolism; beta-ketoadipate pathway; 5-oxo-4,5-dihydro-2-furylacetate from catechol: step 1/3. Inhibited by Ag(+), Cu(+), Hg(2+) and Pb(2+). In terms of biological role, can cleave 4-methylcatechol at lower rates than catechol, but has no activity with 3-methylcatechol, 4-chlorocatechol, 4-carboxycatechol or hydroxyquinol. The chain is Catechol 1,2-dioxygenase (HQD2) from Candida albicans (strain SC5314 / ATCC MYA-2876) (Yeast).